The chain runs to 786 residues: Probable aminopeptidase 1 (786 aa).

Substrate contacts are provided by residues Glu103 and Gly235–Asn239. His270 is a binding site for Zn(2+). Glu271 acts as the Proton acceptor in catalysis. Residues His274 and Glu293 each coordinate Zn(2+).

The protein belongs to the peptidase M1 family. Zn(2+) is required as a cofactor.

It is found in the cytoplasm. The sequence is that of Probable aminopeptidase 1 (ape1) from Sulfurisphaera tokodaii (strain DSM 16993 / JCM 10545 / NBRC 100140 / 7) (Sulfolobus tokodaii).